A 39-amino-acid chain; its full sequence is Omega-theraphotoxin-Bs1b (39 aa).

3 disulfide bridges follow: Cys4-Cys25, Cys8-Cys31, and Cys17-Cys36.

This sequence belongs to the neurotoxin 12 (Hwtx-2) family. 06 (TXP1) subfamily. In terms of tissue distribution, expressed by the venom gland.

Its subcellular location is the secreted. Its function is as follows. Inhibits voltage-gated calcium channels (Cav) in rat cerebellar granule cells. Has insecticidal activity. This chain is Omega-theraphotoxin-Bs1b, found in Brachypelma smithi (Mexican red knee tarantula).